Reading from the N-terminus, the 338-residue chain is MSDDARFQQLNCWLDSCLPELFVAEGWGEVPPAELIPASSDASFRRYFRWQGGDRSLVVMDAPPPQEDCRPFVKVAGLLAGAGVHVPRILAQDLENGFLLLSDLGRQTYLDVLHPGNADELFEPALDALIAFQKVDVAGVLPAYDEAVLRRELQLFPDWYLARHLGVELEGETLARWKRICDLLVRSALEQPRVFVHRDYMPRNLMLSEPNPGVLDFQDALHGPVTYDVTCLYKDAFVSWPEPRVHAALNRYWKKATWAGIPLPPSFEDFLRASDLMGVQRHLKVIGIFARICHRDGKPRYLGDVPRFFRYLETAVARRPELAELGELLASLPQGAEA.

It belongs to the kinase AmgK family.

It catalyses the reaction N-acetyl-D-muramate + ATP = N-acetyl-alpha-D-muramate 1-phosphate + ADP + H(+). The catalysed reaction is N-acetyl-D-glucosamine + ATP = N-acetyl-alpha-D-glucosamine 1-phosphate + ADP + H(+). It functions in the pathway cell wall biogenesis; peptidoglycan recycling. Its function is as follows. Sugar kinase that catalyzes the ATP-dependent phosphorylation of N-acetylmuramate (MurNAc) and N-acetylglucosamine (GlcNAc) at its C1 hydroxyl group, leading to MurNAc alpha-1P and GlcNAc alpha-1P, respectively. Is involved in peptidoglycan recycling as part of a cell wall recycling pathway that bypasses de novo biosynthesis of the peptidoglycan precursor UDP-MurNAc. Plays a role in intrinsic resistance to fosfomycin, which targets the de novo synthesis of UDP-MurNAc. The protein is N-acetylmuramate/N-acetylglucosamine kinase of Pseudomonas aeruginosa (strain ATCC 15692 / DSM 22644 / CIP 104116 / JCM 14847 / LMG 12228 / 1C / PRS 101 / PAO1).